Consider the following 341-residue polypeptide: Methionine import ATP-binding protein MetN 3 (341 aa).

One can recognise an ABC transporter domain in the interval 2-241; sequence IEFQNVTKTF…PSHETTKRFI (240 aa). 38 to 45 provides a ligand contact to ATP; sequence GFSGAGKS.

It belongs to the ABC transporter superfamily. Methionine importer (TC 3.A.1.24) family. In terms of assembly, the complex is composed of two ATP-binding proteins (MetN), two transmembrane proteins (MetI) and a solute-binding protein (MetQ).

The protein localises to the cell membrane. It carries out the reaction L-methionine(out) + ATP + H2O = L-methionine(in) + ADP + phosphate + H(+). The catalysed reaction is D-methionine(out) + ATP + H2O = D-methionine(in) + ADP + phosphate + H(+). Functionally, part of the ABC transporter complex MetNIQ involved in methionine import. Responsible for energy coupling to the transport system. In Oceanobacillus iheyensis (strain DSM 14371 / CIP 107618 / JCM 11309 / KCTC 3954 / HTE831), this protein is Methionine import ATP-binding protein MetN 3.